Here is a 352-residue protein sequence, read N- to C-terminus: uncharacterized protein (352 aa).

Asn14, Asn52, and Asn70 each carry an N-linked (GlcNAc...) asparagine glycan. Residues 41–73 are disordered; sequence LSDYKKNKDTLNNSNNNINQPFENSNNFNNNSK. Residues 50 to 72 show a composition bias toward low complexity; it reads TLNNSNNNINQPFENSNNFNNNS. Residues 131-151 form a helical membrane-spanning segment; it reads IIFKSSGLLITLLVLYLGTFF. 6 N-linked (GlcNAc...) asparagine glycosylation sites follow: Asn165, Asn186, Asn192, Asn193, Asn203, and Asn289. The span at 193–213 shows a compositional bias: low complexity; the sequence is NSSNSNNNNINNSNNNNNNNN. The tract at residues 193 to 219 is disordered; that stretch reads NSSNSNNNNINNSNNNNNNNNRILSPN.

The protein localises to the membrane. This is an uncharacterized protein from Dictyostelium discoideum (Social amoeba).